Here is a 63-residue protein sequence, read N- to C-terminus: Large ribosomal subunit protein uL29 (63 aa).

This sequence belongs to the universal ribosomal protein uL29 family.

The polypeptide is Large ribosomal subunit protein uL29 (Idiomarina loihiensis (strain ATCC BAA-735 / DSM 15497 / L2-TR)).